Consider the following 282-residue polypeptide: Protease HtpX homolog (282 aa).

A run of 2 helical transmembrane segments spans residues Thr-7–Gly-26 and Gly-30–Ser-49. A Zn(2+)-binding site is contributed by His-131. The active site involves Glu-132. His-135 is a Zn(2+) binding site. Transmembrane regions (helical) follow at residues Ile-141 to Ala-161 and Leu-183 to Ile-203. Glu-208 is a binding site for Zn(2+).

This sequence belongs to the peptidase M48B family. It depends on Zn(2+) as a cofactor.

It localises to the cell inner membrane. In Syntrophobacter fumaroxidans (strain DSM 10017 / MPOB), this protein is Protease HtpX homolog.